Reading from the N-terminus, the 232-residue chain is Anti-sigma-K factor RskA (232 aa).

The Cytoplasmic segment spans residues M1–T91. A helical membrane pass occupies residues A92–L112. At T113–R232 the chain is on the extracellular side.

The protein belongs to the anti-sigma-K factor family.

Its subcellular location is the cell membrane. Functionally, an anti-sigma factor for extracytoplasmic function (ECF) sigma factor SigK. ECF sigma factors are held in an inactive form by an anti-sigma factor until released by regulated intramembrane proteolysis (RIP). RIP occurs when an extracytoplasmic signal triggers a concerted proteolytic cascade to transmit information and elicit cellular responses. The membrane-spanning regulatory substrate protein is first cut extracytoplasmically (site-1 protease, S1P), then within the membrane itself (site-2 protease, S2P, Rip1), while cytoplasmic proteases finish degrading the regulatory protein, liberating the sigma factor. In Mycobacterium ulcerans (strain Agy99), this protein is Anti-sigma-K factor RskA (rskA).